The chain runs to 328 residues: PhoH-like protein (328 aa).

Residue 135–142 (GPAGTGKT) participates in ATP binding.

It belongs to the PhoH family.

It localises to the cytoplasm. The polypeptide is PhoH-like protein (Synechocystis sp. (strain ATCC 27184 / PCC 6803 / Kazusa)).